Here is a 261-residue protein sequence, read N- to C-terminus: Zinc finger protein 664 (261 aa).

9 consecutive C2H2-type zinc fingers follow at residues 3 to 25, 31 to 53, 59 to 81, 87 to 109, 115 to 137, 143 to 165, 171 to 193, 199 to 221, and 227 to 249; these read YKCP…QKVH, HKCD…WRDH, YKCD…KKIH, YKCY…MRVH, YVCS…QRVH, FKCE…QRVH, YKCY…QRVH, YRCC…QRVH, and FKCD…QRVH. Lys-257 is covalently cross-linked (Glycyl lysine isopeptide (Lys-Gly) (interchain with G-Cter in SUMO2)).

It belongs to the krueppel C2H2-type zinc-finger protein family. As to expression, expressed in the organ of Corti, stria vascularis, auditory nerve and retina. Lower levels in the tongue, cerebellum, small intestine and kidney.

It is found in the nucleus. Its function is as follows. May be involved in transcriptional regulation. The protein is Zinc finger protein 664 (ZNF664) of Cavia porcellus (Guinea pig).